We begin with the raw amino-acid sequence, 475 residues long: Proton-coupled amino acid transporter 1 (475 aa).

The segment covering 1-15 (MSTQRLRNEDYHDYS) has biased composition (basic and acidic residues). A disordered region spans residues 1-32 (MSTQRLRNEDYHDYSSTDVSPEESPSEGLGSF). The Cytoplasmic segment spans residues 1–50 (MSTQRLRNEDYHDYSSTDVSPEESPSEGLGSFSPGSYQRLGENSSMTWFQ). Residues 51–71 (TLIHLLKGNIGTGLLGLPLAV) form a helical membrane-spanning segment. Residues 72–77 (KNAGLL) are Extracellular-facing. Residues 78–98 (LGPLSLLVIGIVAVHCMGILV) traverse the membrane as a helical segment. Residues 99-140 (KCAHHLCRRLNKPFLDYGDTVMYGLECSPSTWIRNHSHWGRR) are Cytoplasmic-facing. A helical transmembrane segment spans residues 141-161 (IVDFFLVVTQLGFCCVYFVFL). Residues 162-189 (ADNFKQVIEAANGTTTNCNNNETVILTP) lie on the Extracellular side of the membrane. 2 N-linked (GlcNAc...) asparagine glycosylation sites follow: N173 and N182. C179 and C328 are oxidised to a cystine. The helical transmembrane segment at 190-210 (TMDSRLYMLTFLPFLVLLSFI) threads the bilayer. Residues 211–214 (RNLR) are Cytoplasmic-facing. A helical transmembrane segment spans residues 215-235 (ILSIFSLLANISMFVSLIMIY). At 236-256 (QFIVQRIPDPSHLPLVAPWKT) the chain is on the extracellular side. A helical transmembrane segment spans residues 257 to 277 (YPLFFGTAIFAFEGIGVVLPL). The Cytoplasmic portion of the chain corresponds to 278–288 (ENKMKDSQKFP). A helical transmembrane segment spans residues 289 to 309 (LILYLGMAIITVLYISLGSLG). Residues 310 to 341 (YLQFGADIKGSITLNLPNCWLYQSVKLLYSIG) are Extracellular-facing. A helical transmembrane segment spans residues 342–362 (IFFTYALQFYVAAEIIIPAIV). Over 363 to 371 (SRVPERFEL) the chain is Cytoplasmic. A helical membrane pass occupies residues 372-392 (VVDLSARTAMVCVTCVLAVLI). The Extracellular segment spans residues 393–396 (PRLD). A helical membrane pass occupies residues 397–417 (LVISLVGSVSSSALALIIPPL). Residues 418 to 438 (LEVTTYYGEGISPLTITKDAL) are Cytoplasmic-facing. The chain crosses the membrane as a helical span at residues 439–459 (ISILGFVGFVVGTYESLWELI). At 460 to 475 (QPSHSDSSTNSTSAFI) the chain is on the extracellular side. The N-linked (GlcNAc...) asparagine glycan is linked to N469.

The protein belongs to the amino acid/polyamine transporter 2 family. In terms of tissue distribution, widely expressed and predominantly expressed in brain. Within the brain, expression restricted to neurons and not detected in glial cells. Abundant in regions rich in neurons using glutamate and GABA such as Purkinje cells in the cerebellum and pyramidal cells in the hippocampus.

The protein localises to the cell membrane. It localises to the apical cell membrane. It is found in the lysosome membrane. The enzyme catalyses glycine(in) + H(+)(in) = glycine(out) + H(+)(out). The catalysed reaction is L-proline(out) + H(+)(out) = L-proline(in) + H(+)(in). It catalyses the reaction D-proline(out) + H(+)(out) = D-proline(in) + H(+)(in). It carries out the reaction L-alanine(in) + H(+)(in) = L-alanine(out) + H(+)(out). The enzyme catalyses D-alanine(in) + H(+)(in) = D-alanine(out) + H(+)(out). The catalysed reaction is L-serine(in) + H(+)(in) = L-serine(out) + H(+)(out). It catalyses the reaction D-serine(out) + H(+)(out) = D-serine(in) + H(+)(in). It carries out the reaction 4-aminobutanoate(in) + H(+)(in) = 4-aminobutanoate(out) + H(+)(out). The enzyme catalyses beta-alanine(in) + H(+)(in) = beta-alanine(out) + H(+)(out). Its function is as follows. Electrogenic proton/amino acid symporter with selectivity for small apolar L-amino acids, their D-enantiomers and selected amino acid derivatives such as 4-aminobutanoate/GABA. May be involved in the efflux from the lysosomal compartment of neutral amino acids resulting from proteolysis. May play a role in specifying sites for exocytosis in neurons. The chain is Proton-coupled amino acid transporter 1 from Rattus norvegicus (Rat).